Consider the following 1407-residue polypeptide: DNA-directed RNA polymerase subunit beta' (1407 aa).

The Zn(2+) site is built by cysteine 70, cysteine 72, cysteine 85, and cysteine 88. Mg(2+) contacts are provided by aspartate 460, aspartate 462, and aspartate 464. Residues cysteine 814, cysteine 888, cysteine 895, and cysteine 898 each contribute to the Zn(2+) site. Lysine 972 carries the N6-acetyllysine modification.

It belongs to the RNA polymerase beta' chain family. In terms of assembly, the RNAP catalytic core consists of 2 alpha, 1 beta, 1 beta' and 1 omega subunit. When a sigma factor is associated with the core the holoenzyme is formed, which can initiate transcription. The cofactor is Mg(2+). Zn(2+) serves as cofactor.

The catalysed reaction is RNA(n) + a ribonucleoside 5'-triphosphate = RNA(n+1) + diphosphate. Functionally, DNA-dependent RNA polymerase catalyzes the transcription of DNA into RNA using the four ribonucleoside triphosphates as substrates. This Shigella boydii serotype 18 (strain CDC 3083-94 / BS512) protein is DNA-directed RNA polymerase subunit beta'.